The sequence spans 481 residues: Pentatricopeptide repeat-containing protein At2g48000 (481 aa).

PPR repeat units follow at residues 147–181 (TTSV…QDGP), 187–221 (SVST…NILP), 222–256 (DSST…LVKP), 257–287 (TLAT…VKRH), 292–324 (EIKL…LIPK), 328–362 (KPWL…GLQI), 364–398 (TDGI…GWKM), 399–433 (SRSM…KISR), and 434–469 (SKKT…GHDF).

The protein belongs to the PPR family. P subfamily.

This Arabidopsis thaliana (Mouse-ear cress) protein is Pentatricopeptide repeat-containing protein At2g48000.